The chain runs to 514 residues: Alstonine synthase (514 aa).

The helical transmembrane segment at 4-24 threads the bilayer; sequence PQFSCLLPAFFLLVVFLFLLI. N-linked (GlcNAc...) asparagine glycosylation occurs at N428. C450 contacts heme.

Belongs to the cytochrome P450 family. It depends on heme as a cofactor.

The protein localises to the membrane. The enzyme catalyses tetrahydroalstonine + A + reduced [NADPH--hemoprotein reductase] + O2 = alstonine + AH2 + oxidized [NADPH--hemoprotein reductase] + 2 H2O + H(+). Its pathway is alkaloid biosynthesis. A cytochrome P450 monooxygenase involved in the biosynthesis of pentacyclic alkaloids natural products such as alstonine, putative antipsychotic compounds. Catalyzes the conversion of tetrahydroalstonine to alstonine. No oxidative activity towards ajmalicine. The polypeptide is Alstonine synthase (Alstonia scholaris (Dogbane)).